The following is a 288-amino-acid chain: Shikimate kinase (288 aa).

81 to 91 (PVASGLKSSSA) contacts ATP.

Belongs to the GHMP kinase family. Archaeal shikimate kinase subfamily.

The protein localises to the cytoplasm. It catalyses the reaction shikimate + ATP = 3-phosphoshikimate + ADP + H(+). Its pathway is metabolic intermediate biosynthesis; chorismate biosynthesis; chorismate from D-erythrose 4-phosphate and phosphoenolpyruvate: step 5/7. The sequence is that of Shikimate kinase from Methanothrix thermoacetophila (strain DSM 6194 / JCM 14653 / NBRC 101360 / PT) (Methanosaeta thermophila).